The following is a 283-amino-acid chain: Ribosomal RNA small subunit methyltransferase I (283 aa).

Belongs to the methyltransferase superfamily. RsmI family.

The protein localises to the cytoplasm. The catalysed reaction is cytidine(1402) in 16S rRNA + S-adenosyl-L-methionine = 2'-O-methylcytidine(1402) in 16S rRNA + S-adenosyl-L-homocysteine + H(+). Catalyzes the 2'-O-methylation of the ribose of cytidine 1402 (C1402) in 16S rRNA. This chain is Ribosomal RNA small subunit methyltransferase I, found in Haemophilus influenzae (strain ATCC 51907 / DSM 11121 / KW20 / Rd).